Consider the following 652-residue polypeptide: Maternal embryonic leucine zipper kinase (652 aa).

In terms of domain architecture, Protein kinase spans 13-265 (YELHETIGTG…VKHLLSHPWL (253 aa)). ATP is bound by residues 19 to 27 (IGTGGFAKV) and K42. D134 functions as the Proton acceptor in the catalytic mechanism. T169 is modified (phosphothreonine; by autocatalysis). S173 carries the post-translational modification Phosphoserine; by autocatalysis. The interval 284–323 (VDEDCVTELSVFYKCSRTSTSRLISEWNYDHITASYLLLH) is UBA-like. The tract at residues 328–652 (HGKPVRLKRP…VEDILSSCKV (325 aa)) is autoinhibitory region. Phosphothreonine occurs at positions 415, 450, 452, 482, and 484. The segment at 443–492 (FLHPAPWTPTPRRKQNEKKGILTTPNKNSHTKEKNQSKETPTKKPITTGE) is disordered. Over residues 472–484 (HTKEKNQSKETPT) the composition is skewed to basic and acidic residues. Phosphoserine is present on residues S499, S506, and S518. The 50-residue stretch at 603 to 652 (SDFGKVTMQFELEVCQLSKSEMVGIRRQRLKGDAWVYKRLVEDILSSCKV) folds into the KA1 domain.

Belongs to the protein kinase superfamily. CAMK Ser/Thr protein kinase family. SNF1 subfamily. In terms of processing, autophosphorylated: autophosphorylation of the T-loop at Thr-169 and Ser-173 is required for activation. Phosphorylated by the maturation promoting factor (MPF), composed of cdk1 and a cyclin-B. Also phosphorylated by some MAPK. Phosphorylated during oocyte maturation. Dephosphorylation destabilizes the protein. Post-translationally, degraded when cells exit mitosis.

It localises to the cell membrane. It catalyses the reaction L-seryl-[protein] + ATP = O-phospho-L-seryl-[protein] + ADP + H(+). It carries out the reaction L-threonyl-[protein] + ATP = O-phospho-L-threonyl-[protein] + ADP + H(+). Its activity is regulated as follows. Activated by autophosphorylation of the T-loop at Thr-169 and Ser-173: in contrast to other members of the SNF1 subfamily, phosphorylation at Thr-169 is not mediated by STK11/LKB1 but via autophosphorylation instead. Functionally, serine/threonine-protein kinase involved in various processes such as cell cycle regulation, self-renewal of stem cells, apoptosis and splicing regulation. Also plays a role in primitive hematopoiesis, possibly by affecting the expression of genes critical for hematopoiesis. Plays a role in cytokinesis during early development. The polypeptide is Maternal embryonic leucine zipper kinase (melk) (Xenopus tropicalis (Western clawed frog)).